The primary structure comprises 205 residues: Proteasome subunit beta type-3 (205 aa).

N-acetylserine is present on Ser-2. Lys-77 is modified (N6-acetyllysine).

This sequence belongs to the peptidase T1B family. In terms of assembly, the 26S proteasome consists of a 20S proteasome core and two 19S regulatory subunits. The 20S proteasome core is a barrel-shaped complex made of 28 subunits that are arranged in four stacked rings. The two outer rings are each formed by seven alpha subunits, and the two inner rings are formed by seven beta subunits. The proteolytic activity is exerted by three beta-subunits PSMB5, PSMB6 and PSMB7.

The protein localises to the cytoplasm. It localises to the nucleus. Functionally, non-catalytic component of the 20S core proteasome complex involved in the proteolytic degradation of most intracellular proteins. This complex plays numerous essential roles within the cell by associating with different regulatory particles. Associated with two 19S regulatory particles, forms the 26S proteasome and thus participates in the ATP-dependent degradation of ubiquitinated proteins. The 26S proteasome plays a key role in the maintenance of protein homeostasis by removing misfolded or damaged proteins that could impair cellular functions, and by removing proteins whose functions are no longer required. Associated with the PA200 or PA28, the 20S proteasome mediates ubiquitin-independent protein degradation. This type of proteolysis is required in several pathways including spermatogenesis (20S-PA200 complex) or generation of a subset of MHC class I-presented antigenic peptides (20S-PA28 complex). This chain is Proteasome subunit beta type-3 (PSMB3), found in Bos taurus (Bovine).